Reading from the N-terminus, the 310-residue chain is Acetylglutamate kinase (310 aa).

Residues 83 to 84 (GG), R105, and N207 contribute to the substrate site.

Belongs to the acetylglutamate kinase family. ArgB subfamily.

The protein resides in the cytoplasm. It carries out the reaction N-acetyl-L-glutamate + ATP = N-acetyl-L-glutamyl 5-phosphate + ADP. It functions in the pathway amino-acid biosynthesis; L-arginine biosynthesis; N(2)-acetyl-L-ornithine from L-glutamate: step 2/4. Catalyzes the ATP-dependent phosphorylation of N-acetyl-L-glutamate. This chain is Acetylglutamate kinase, found in Ralstonia nicotianae (strain ATCC BAA-1114 / GMI1000) (Ralstonia solanacearum).